The following is a 262-amino-acid chain: Adenosylcobinamide-GDP ribazoletransferase (262 aa).

A run of 6 helical transmembrane segments spans residues 11–31 (LNLF…SWVI), 43–63 (YFGL…WFTQ), 66–86 (LPTS…TGGF), 121–141 (AIVL…LALF), 146–166 (AITG…SLIF), and 199–219 (IFVL…SLWA).

This sequence belongs to the CobS family. Mg(2+) serves as cofactor.

Its subcellular location is the cell inner membrane. The enzyme catalyses alpha-ribazole + adenosylcob(III)inamide-GDP = adenosylcob(III)alamin + GMP + H(+). It catalyses the reaction alpha-ribazole 5'-phosphate + adenosylcob(III)inamide-GDP = adenosylcob(III)alamin 5'-phosphate + GMP + H(+). Its pathway is cofactor biosynthesis; adenosylcobalamin biosynthesis; adenosylcobalamin from cob(II)yrinate a,c-diamide: step 7/7. Joins adenosylcobinamide-GDP and alpha-ribazole to generate adenosylcobalamin (Ado-cobalamin). Also synthesizes adenosylcobalamin 5'-phosphate from adenosylcobinamide-GDP and alpha-ribazole 5'-phosphate. In Shewanella denitrificans (strain OS217 / ATCC BAA-1090 / DSM 15013), this protein is Adenosylcobinamide-GDP ribazoletransferase.